A 782-amino-acid chain; its full sequence is Calcium-independent phospholipase A2-gamma (782 aa).

The N-linked (GlcNAc...) asparagine glycan is linked to asparagine 4. 2 disordered regions span residues 219 to 275 (EKMS…PSAI) and 317 to 343 (SKSQ…AEEK). Residues 220-248 (KMSQQKENEHFRDKSELEDKKVEEGKLRS) are compositionally biased toward basic and acidic residues. Asparagine 361 carries an N-linked (GlcNAc...) asparagine glycan. One can recognise a PNPLA domain in the interval 445-640 (LSIDGGGTRG…LLNNPSALAM (196 aa)). Residues 449–454 (GGGTRG) carry the GXGXXG motif. A helical membrane pass occupies residues 475–495 (LFDYICGVSTGAILAFMLGLF). The GXSXG signature appears at 481–485 (GVSTG). The active-site Nucleophile is the serine 483. The active-site Proton acceptor is aspartate 627. Residues 627–629 (DGG) carry the DGA/G motif. An N6-succinyllysine modification is found at lysine 736.

As to expression, expressed in parenchymal tissues including heart, skeletal muscle, placenta, brain, liver and pancreas. Also expressed in bronchial epithelial cells and kidney. Highest expression is observed in skeletal muscle and heart.

The protein localises to the endoplasmic reticulum membrane. Its subcellular location is the mitochondrion membrane. It is found in the peroxisome membrane. The enzyme catalyses a 1,2-diacyl-sn-glycero-3-phosphocholine + H2O = a 1-acyl-sn-glycero-3-phosphocholine + a fatty acid + H(+). It catalyses the reaction a 1,2-diacyl-sn-glycero-3-phosphocholine + H2O = a 2-acyl-sn-glycero-3-phosphocholine + a fatty acid + H(+). It carries out the reaction a 1,2-diacyl-sn-glycero-3-phosphoethanolamine + H2O = a 1-acyl-sn-glycero-3-phosphoethanolamine + a fatty acid + H(+). The catalysed reaction is a 1-O-(1Z-alkenyl)-2-acyl-sn-glycero-3-phosphocholine + H2O = a 1-O-(1Z-alkenyl)-sn-glycero-3-phosphocholine + a fatty acid + H(+). The enzyme catalyses a 1-acyl-sn-glycero-3-phosphocholine + H2O = sn-glycerol 3-phosphocholine + a fatty acid + H(+). It catalyses the reaction 1-acyl-2-(9Z,12Z)-octadecadienoyl-sn-glycero-3-phosphocholine + H2O = a 1-acyl-sn-glycero-3-phosphocholine + (9Z,12Z)-octadecadienoate + H(+). It carries out the reaction 1-acyl-2-(5Z,8Z,11Z,14Z-eicosatetraenoyl)-sn-glycero-3-phosphocholine + H2O = a 1-acyl-sn-glycero-3-phosphocholine + (5Z,8Z,11Z,14Z)-eicosatetraenoate + H(+). The catalysed reaction is 1-hexadecanoyl-2-(5Z,8Z,11Z,14Z-eicosatetraenoyl)-sn-glycero-3-phosphocholine + H2O = 1-hexadecanoyl-sn-glycero-3-phosphocholine + (5Z,8Z,11Z,14Z)-eicosatetraenoate + H(+). The enzyme catalyses 1-octadecanoyl-2-(9Z-octadecenoyl)-sn-glycero-3-phosphocholine + H2O = 1-octadecanoyl-sn-glycero-3-phosphocholine + (9Z)-octadecenoate + H(+). It catalyses the reaction 1-hexadecanoyl-2-(9Z-octadecenoyl)-sn-glycero-3-phosphocholine + H2O = 1-hexadecanoyl-sn-glycero-3-phosphocholine + (9Z)-octadecenoate + H(+). It carries out the reaction 1-hexadecanoyl-2-(9Z,12Z-octadecadienoyl)-sn-glycero-3-phosphocholine + H2O = (9Z,12Z)-octadecadienoate + 1-hexadecanoyl-sn-glycero-3-phosphocholine + H(+). The catalysed reaction is 1-acyl-2-(9Z,12Z)-octadecadienoyl-sn-glycero-3-phosphoethanolamine + H2O = a 1-acyl-sn-glycero-3-phosphoethanolamine + (9Z,12Z)-octadecadienoate + H(+). The enzyme catalyses 1-acyl-2-(5Z,8Z,11Z,14Z)-eicosatetraenoyl-sn-glycero-3-phosphoethanolamine + H2O = a 1-acyl-sn-glycero-3-phosphoethanolamine + (5Z,8Z,11Z,14Z)-eicosatetraenoate + H(+). It catalyses the reaction 1-hexadecanoyl-2-(5Z,8Z,11Z,14Z-eicosatetraenoyl)-sn-glycero-3-phosphoethanolamine + H2O = 1-hexadecanoyl-sn-glycero-3-phosphoethanolamine + (5Z,8Z,11Z,14Z)-eicosatetraenoate + H(+). It carries out the reaction 1-hexadecanoyl-2-(5Z,8Z,11Z,14Z-eicosatetraenoyl)-sn-glycero-3-phosphocholine + H2O = 2-(5Z,8Z,11Z,14Z)-eicosatetraenoyl-sn-glycero-3-phosphocholine + hexadecanoate + H(+). The catalysed reaction is 1-octadecanoyl-2-(9Z-octadecenoyl)-sn-glycero-3-phosphocholine + H2O = 2-(9Z-octadecenoyl)-sn-glycero-3-phosphocholine + octadecanoate + H(+). The enzyme catalyses 1-hexadecanoyl-2-(4Z,7Z,10Z,13Z,16Z,19Z-docosahexaenoyl)-sn-glycero-3-phosphocholine + H2O = 2-(4Z,7Z,10Z,13Z,16Z,19Z-docosahexaenoyl)-sn-glycero-3-phosphocholine + hexadecanoate + H(+). It catalyses the reaction 1-O-(1Z)-hexadecenyl-2 (5Z,8Z,11Z,14Z)-eicosatetraenoyl-sn-glycero-3-phosphocholine + H2O = 1-(1Z-hexadecenyl)-sn-glycero-3-phosphocholine + (5Z,8Z,11Z,14Z)-eicosatetraenoate + H(+). It carries out the reaction 1-O-(1Z-hexadecenyl)-2-(9Z-octadecenoyl)-sn-glycero-3-phosphocholine + H2O = 1-(1Z-hexadecenyl)-sn-glycero-3-phosphocholine + (9Z)-octadecenoate + H(+). The catalysed reaction is 1-hexadecanoyl-sn-glycero-3-phosphocholine + H2O = sn-glycerol 3-phosphocholine + hexadecanoate + H(+). The enzyme catalyses 1',3'-bis-[1,2-di-(9Z,12Z-octadecadienoyl)-sn-glycero-3-phospho]-glycerol + H2O = 1'-[1,2-di-(9Z,12Z-octadecadienoyl)-sn-glycero-3-phospho]-3'-[1-(9Z,12Z-octadecadienoyl)-sn-glycero-3-phospho]-glycerol + (9Z,12Z)-octadecadienoate + H(+). It catalyses the reaction 1'-[1-acyl-2-(9-hydroxy-(10E,12Z)-octadecadienoyl)-sn-glycero-3-phospho]-3'-[1,2-diacyl-sn-glycero-3-phospho]-glycerol + H2O = 9-hydroxy-(10E,12Z)-octadecadienoate + 1'-[1,2-diacyl-sn-glycero-3-phospho],3'-[1-acyl-sn-glycero-3-phospho]-glycerol + H(+). It participates in phospholipid metabolism. With respect to regulation, calcium-independent phospholipase. Inhibited by (E)-6-bromomethylene-3-1-naphthalenyl-2H-tetrahydropyran-2-one (BEL). The activity toward 1-hexadecanoyl-2-(5Z,8Z,11Z,14Z-eicosatetraenoyl)-sn-glycero-3-phosphocholine is stimulated by cardiolipin. Calcium-independent and membrane-bound phospholipase, that catalyzes the esterolytic cleavage of fatty acids from glycerophospholipids to yield free fatty acids and lysophospholipids, hence regulating membrane physical properties and the release of lipid second messengers and growth factors. Hydrolyzes phosphatidylethanolamine, phosphatidylcholine and probably phosphatidylinositol with a possible preference for the former. Also has a broad substrate specificity in terms of fatty acid moieties, hydrolyzing saturated and mono-unsaturated fatty acids at nearly equal rates from either the sn-1 or sn-2 position in diacyl phosphatidylcholine. However, has a weak activity toward polyunsaturated fatty acids at the sn-2 position, and thereby favors the production of 2-arachidonoyl lysophosphatidylcholine, a key branch point metabolite in eicosanoid signaling. On the other hand, can produce arachidonic acid from the sn-1 position of diacyl phospholipid and from the sn-2 position of arachidonate-containing plasmalogen substrates. Therefore, plays an important role in the mobilization of arachidonic acid in response to cellular stimuli and the generation of lipid second messengers. Can also hydrolyze lysophosphatidylcholine. In the mitochondrial compartment, catalyzes the hydrolysis and release of oxidized aliphatic chains from cardiolipin and integrates mitochondrial bioenergetics and signaling. It is essential for maintaining efficient bioenergetic mitochondrial function through tailoring mitochondrial membrane lipid metabolism and composition. The chain is Calcium-independent phospholipase A2-gamma from Homo sapiens (Human).